The primary structure comprises 509 residues: Lysine--tRNA ligase (509 aa).

Residues Glu-419 and Glu-426 each coordinate Mg(2+).

The protein belongs to the class-II aminoacyl-tRNA synthetase family. In terms of assembly, homodimer. Mg(2+) is required as a cofactor.

The protein resides in the cytoplasm. It catalyses the reaction tRNA(Lys) + L-lysine + ATP = L-lysyl-tRNA(Lys) + AMP + diphosphate. This chain is Lysine--tRNA ligase, found in Methylobacillus flagellatus (strain ATCC 51484 / DSM 6875 / VKM B-1610 / KT).